A 266-amino-acid polypeptide reads, in one-letter code: Glucosamine-6-phosphate deaminase (266 aa).

Asp-72 serves as the catalytic Proton acceptor; for enolization step. Asp-141 serves as the catalytic For ring-opening step. Residue His-143 is the Proton acceptor; for ring-opening step of the active site. Residue Glu-148 is the For ring-opening step of the active site.

It belongs to the glucosamine/galactosamine-6-phosphate isomerase family. NagB subfamily. Homohexamer.

It carries out the reaction alpha-D-glucosamine 6-phosphate + H2O = beta-D-fructose 6-phosphate + NH4(+). It participates in amino-sugar metabolism; N-acetylneuraminate degradation; D-fructose 6-phosphate from N-acetylneuraminate: step 5/5. With respect to regulation, allosterically activated by N-acetylglucosamine 6-phosphate (GlcNAc6P). Catalyzes the reversible isomerization-deamination of glucosamine 6-phosphate (GlcN6P) to form fructose 6-phosphate (Fru6P) and ammonium ion. This Edwardsiella ictaluri (strain 93-146) protein is Glucosamine-6-phosphate deaminase.